A 394-amino-acid polypeptide reads, in one-letter code: Anhydro-N-acetylmuramic acid kinase (394 aa).

11 to 18 (GTSADGID) lines the ATP pocket.

The protein belongs to the anhydro-N-acetylmuramic acid kinase family.

The enzyme catalyses 1,6-anhydro-N-acetyl-beta-muramate + ATP + H2O = N-acetyl-D-muramate 6-phosphate + ADP + H(+). It functions in the pathway amino-sugar metabolism; 1,6-anhydro-N-acetylmuramate degradation. It participates in cell wall biogenesis; peptidoglycan recycling. Its function is as follows. Catalyzes the specific phosphorylation of 1,6-anhydro-N-acetylmuramic acid (anhMurNAc) with the simultaneous cleavage of the 1,6-anhydro ring, generating MurNAc-6-P. Is required for the utilization of anhMurNAc either imported from the medium or derived from its own cell wall murein, and thus plays a role in cell wall recycling. This Deinococcus geothermalis (strain DSM 11300 / CIP 105573 / AG-3a) protein is Anhydro-N-acetylmuramic acid kinase.